We begin with the raw amino-acid sequence, 299 residues long: ATP phosphoribosyltransferase (299 aa).

This sequence belongs to the ATP phosphoribosyltransferase family. Long subfamily. As to quaternary structure, equilibrium between an active dimeric form, an inactive hexameric form and higher aggregates. Interconversion between the various forms is largely reversible and is influenced by the natural substrates and inhibitors of the enzyme. Mg(2+) is required as a cofactor.

It is found in the cytoplasm. It catalyses the reaction 1-(5-phospho-beta-D-ribosyl)-ATP + diphosphate = 5-phospho-alpha-D-ribose 1-diphosphate + ATP. Its pathway is amino-acid biosynthesis; L-histidine biosynthesis; L-histidine from 5-phospho-alpha-D-ribose 1-diphosphate: step 1/9. Feedback inhibited by histidine. Functionally, catalyzes the condensation of ATP and 5-phosphoribose 1-diphosphate to form N'-(5'-phosphoribosyl)-ATP (PR-ATP). Has a crucial role in the pathway because the rate of histidine biosynthesis seems to be controlled primarily by regulation of HisG enzymatic activity. The sequence is that of ATP phosphoribosyltransferase from Salmonella enteritidis PT4 (strain P125109).